The primary structure comprises 863 residues: MEIRKDYDAHEVEEKWLKLWKDEMYYFDWNSEKPHYIIDTPPPYPTGSFHIGHALNWCIIDFIARYKRMNGYEVMFPQGWDCHGLPTEVKVEEKYGIKKGDIPRDEFRRLCVEFTEENIAKMRETARRMGYSIDWSKEYITMYPEYYSKTQLSFVRMYNKGLIYRDYHPVVFCPRCETTIALAEIEYRQGKTKLNYIKFDDDVIIATTRPELIPACVAIAVHPDDERNKHLIGKKVRVPTTPYEVEVIADEEVDPEFGTGVVMICTFGDRQDVKWWKKHKLELRNIVGRDGRLNEKAGRYAGMTIPEAREAILEDLKKEGKLLKQVEIDHNVGTCWRCKTPVEIIPAEQWFVKVEKEKILEAAKRIKWVPEHMYSRLESWVQSMEWDWVISRQRIFATPIPAWYCKNCGEVVVAKEEWLPVDPTATQPPEPCPKCGSTEFRGETDVLDTWMDSSITPLMICGWPSLKEYPTHLRPQGHDIIRTWAFYTILRSLALEGQIPWYEIVINGMVFGEDGRKMSKSLGNVIVPEEVVEKYGVDALRQWAASGVIGDDIIFNWKDVIAASRFQQKFWSITRFTLMHISDYTPSEEDKKLLRDADRWILSKLNRLVGEVRKHMDEYRFDEAIKAIRTFTWYEYADNYLEIVKNRLYSGSEEEKRAAKFVLSYALDVLTRLLAPITPFMAEECWSHFREGSVHLQSYPVVEEEFLDERAEKAGEEIKEIVAAVRKFKHDKGLALNAPLKKLIVYSKLDGLDVRDIAGATNSEVEIVTEMPEVRERVKELKPKFAIIGPMFREKAKTLIKAVGSLSKEEKERLLKEGAIQVNLDGASVEVKAEWFEAVTEKSIEGREVEMLETANSVVFVEV.

Positions 43–53 (PYPTGSFHIGH) match the 'HIGH' region motif. Residues 517 to 521 (KMSKS) carry the 'KMSKS' region motif. Lysine 520 contacts ATP.

Belongs to the class-I aminoacyl-tRNA synthetase family. ValS type 2 subfamily.

It is found in the cytoplasm. The enzyme catalyses tRNA(Val) + L-valine + ATP = L-valyl-tRNA(Val) + AMP + diphosphate. In terms of biological role, catalyzes the attachment of valine to tRNA(Val). As ValRS can inadvertently accommodate and process structurally similar amino acids such as threonine, to avoid such errors, it has a 'posttransfer' editing activity that hydrolyzes mischarged Thr-tRNA(Val) in a tRNA-dependent manner. The protein is Valine--tRNA ligase of Archaeoglobus fulgidus (strain ATCC 49558 / DSM 4304 / JCM 9628 / NBRC 100126 / VC-16).